A 533-amino-acid chain; its full sequence is MTSEQFPWLTGIILLPILAALPIPLIPDKDGRTVRWYSLFVGLADFALMVYAFWQHFDRSEAGLQMVEKISWVPQIGLNWSLAVDGLSMPLVLLTGLVTTLAILASWNINVKPKLFHFLLLLLYGAQIAVFTAQDMMLFFLVWELELVPVYLLISIWGGPKRQYAATKFILYTALASLFILVAGLALAFSGDSFSFDLTELGLKDYSLWLELLAYAGFLIAFGVKLSIFPLHTWLPDAHGEANAPGSMLLAGILLKMGGYALIRFNVQLLPEAHIRFAPVLAVLGIVNIIYGALNAFAQDNLKRKIAYSSISHMGFVLLGIAAYNSLGLNGALLQMLSHGLIAAALFFLAGVAYERTHTLQIPQISGLAKQMPITFALFTVTAMASLALPGMSGFVSELTVFLGFTDSVYSSGFRTVTILLAAVGLVLTPMYLLSMLRRIFYGTYNIQLGQVLADAKPRELFVAFCLLVPTLAIGFYPKLTTQVYDVTTTALAAQVQSNLPVVALAQQGSLYSQMPAAEEATAVSMTAPPVID.

The next 14 helical transmembrane spans lie at 6–26, 37–57, 87–107, 113–133, 137–157, 169–189, 209–229, 243–263, 277–297, 311–331, 332–352, 376–396, 417–437, and 461–481; these read FPWLTGIILLPILAALPIPLI, YSLFVGLADFALMVYAFWQHF, LSMPLVLLTGLVTTLAILASW, PKLFHFLLLLLYGAQIAVFTA, MLFFLVWELELVPVYLLISIW, FILYTALASLFILVAGLALAF, WLELLAYAGFLIAFGVKLSIF, NAPGSMLLAGILLKMGGYALI, FAPVLAVLGIVNIIYGALNAF, ISHMGFVLLGIAAYNSLGLNG, ALLQMLSHGLIAAALFFLAGV, FALFTVTAMASLALPGMSGFV, VTILLAAVGLVLTPMYLLSML, and LFVAFCLLVPTLAIGFYPKLT.

The protein belongs to the complex I subunit 4 family.

The protein resides in the cellular thylakoid membrane. It catalyses the reaction a plastoquinone + NADH + (n+1) H(+)(in) = a plastoquinol + NAD(+) + n H(+)(out). The enzyme catalyses a plastoquinone + NADPH + (n+1) H(+)(in) = a plastoquinol + NADP(+) + n H(+)(out). Its function is as follows. NDH-1 shuttles electrons from NAD(P)H, via FMN and iron-sulfur (Fe-S) centers, to quinones in the respiratory chain. The immediate electron acceptor for the enzyme in this species is believed to be plastoquinone. Couples the redox reaction to proton translocation (for every two electrons transferred, four hydrogen ions are translocated across the cytoplasmic membrane), and thus conserves the redox energy in a proton gradient. In Synechococcus elongatus (strain ATCC 33912 / PCC 7942 / FACHB-805) (Anacystis nidulans R2), this protein is NAD(P)H-quinone oxidoreductase chain 4 1.